The following is a 135-amino-acid chain: Lactoylglutathione lyase (135 aa).

The VOC domain occupies 2-126 (QILHTMLRVG…DGYKIEFIEN (125 aa)). Histidine 5 serves as a coordination point for Ni(2+). Arginine 9 is a substrate binding site. Glutamate 56 is a binding site for Ni(2+). Substrate is bound by residues asparagine 60 and histidine 74. Ni(2+) contacts are provided by histidine 74 and glutamate 122. Glutamate 122 functions as the Proton donor/acceptor in the catalytic mechanism.

The protein belongs to the glyoxalase I family. Homodimer. Ni(2+) is required as a cofactor.

The catalysed reaction is (R)-S-lactoylglutathione = methylglyoxal + glutathione. Its pathway is secondary metabolite metabolism; methylglyoxal degradation; (R)-lactate from methylglyoxal: step 1/2. Catalyzes the conversion of hemimercaptal, formed from methylglyoxal and glutathione, to S-lactoylglutathione. The chain is Lactoylglutathione lyase (gloA) from Haemophilus influenzae (strain ATCC 51907 / DSM 11121 / KW20 / Rd).